The chain runs to 255 residues: Thiazole synthase (255 aa).

Catalysis depends on K96, which acts as the Schiff-base intermediate with DXP. 1-deoxy-D-xylulose 5-phosphate is bound by residues G157, 183–184 (AG), and 205–206 (NT).

This sequence belongs to the ThiG family. In terms of assembly, homotetramer. Forms heterodimers with either ThiH or ThiS.

Its subcellular location is the cytoplasm. The catalysed reaction is [ThiS sulfur-carrier protein]-C-terminal-Gly-aminoethanethioate + 2-iminoacetate + 1-deoxy-D-xylulose 5-phosphate = [ThiS sulfur-carrier protein]-C-terminal Gly-Gly + 2-[(2R,5Z)-2-carboxy-4-methylthiazol-5(2H)-ylidene]ethyl phosphate + 2 H2O + H(+). It participates in cofactor biosynthesis; thiamine diphosphate biosynthesis. Its function is as follows. Catalyzes the rearrangement of 1-deoxy-D-xylulose 5-phosphate (DXP) to produce the thiazole phosphate moiety of thiamine. Sulfur is provided by the thiocarboxylate moiety of the carrier protein ThiS. In vitro, sulfur can be provided by H(2)S. This Anoxybacillus flavithermus (strain DSM 21510 / WK1) protein is Thiazole synthase.